A 98-amino-acid polypeptide reads, in one-letter code: Large ribosomal subunit protein uL23c (98 aa).

This sequence belongs to the universal ribosomal protein uL23 family. In terms of assembly, part of the 50S ribosomal subunit.

The protein resides in the plastid. Functionally, binds to 23S rRNA. The chain is Large ribosomal subunit protein uL23c (rpl23) from Euglena longa (Euglenophycean alga).